Reading from the N-terminus, the 354-residue chain is Methylthioribose-1-phosphate isomerase (354 aa).

Substrate contacts are provided by residues 58-60, Arg101, and Gln204; that span reads RGA. Asp245 serves as the catalytic Proton donor. A substrate-binding site is contributed by 255-256; that stretch reads NK.

Belongs to the eIF-2B alpha/beta/delta subunits family. MtnA subfamily.

The catalysed reaction is 5-(methylsulfanyl)-alpha-D-ribose 1-phosphate = 5-(methylsulfanyl)-D-ribulose 1-phosphate. Its pathway is amino-acid biosynthesis; L-methionine biosynthesis via salvage pathway; L-methionine from S-methyl-5-thio-alpha-D-ribose 1-phosphate: step 1/6. Catalyzes the interconversion of methylthioribose-1-phosphate (MTR-1-P) into methylthioribulose-1-phosphate (MTRu-1-P). The polypeptide is Methylthioribose-1-phosphate isomerase (Xylella fastidiosa (strain 9a5c)).